The sequence spans 281 residues: NAD-dependent protein deacetylase 1 (281 aa).

A Deacetylase sirtuin-type domain is found at 1–281 (MEEGAALEGV…FDQILDALDL (281 aa)). Residues 24-44 (GAGV…GSLN) and 102-105 (QNVD) each bind NAD(+). H120 functions as the Proton acceptor in the catalytic mechanism. The Zn(2+) site is built by C128, C131, C183, and C186. NAD(+) is bound by residues 224–226 (GSS), 250–252 (NGG), and V268.

This sequence belongs to the sirtuin family. Class II subfamily. Zn(2+) is required as a cofactor.

It is found in the cytoplasm. It catalyses the reaction N(6)-acetyl-L-lysyl-[protein] + NAD(+) + H2O = 2''-O-acetyl-ADP-D-ribose + nicotinamide + L-lysyl-[protein]. Functionally, NAD-dependent protein deacetylase which modulates the activities of several enzymes which are inactive in their acetylated form. The protein is NAD-dependent protein deacetylase 1 of Corynebacterium efficiens (strain DSM 44549 / YS-314 / AJ 12310 / JCM 11189 / NBRC 100395).